Consider the following 281-residue polypeptide: Bifunctional protein FolD (281 aa).

NADP(+) is bound by residues Gly-165–Gly-167, Thr-192, and Val-233.

This sequence belongs to the tetrahydrofolate dehydrogenase/cyclohydrolase family. Homodimer.

It catalyses the reaction (6R)-5,10-methylene-5,6,7,8-tetrahydrofolate + NADP(+) = (6R)-5,10-methenyltetrahydrofolate + NADPH. The catalysed reaction is (6R)-5,10-methenyltetrahydrofolate + H2O = (6R)-10-formyltetrahydrofolate + H(+). It participates in one-carbon metabolism; tetrahydrofolate interconversion. Its function is as follows. Catalyzes the oxidation of 5,10-methylenetetrahydrofolate to 5,10-methenyltetrahydrofolate and then the hydrolysis of 5,10-methenyltetrahydrofolate to 10-formyltetrahydrofolate. The chain is Bifunctional protein FolD from Mycolicibacterium paratuberculosis (strain ATCC BAA-968 / K-10) (Mycobacterium paratuberculosis).